Reading from the N-terminus, the 342-residue chain is Ribosomal RNA small subunit methyltransferase C (342 aa).

Belongs to the methyltransferase superfamily. RsmC family. In terms of assembly, monomer.

It is found in the cytoplasm. It catalyses the reaction guanosine(1207) in 16S rRNA + S-adenosyl-L-methionine = N(2)-methylguanosine(1207) in 16S rRNA + S-adenosyl-L-homocysteine + H(+). Specifically methylates the guanine in position 1207 of 16S rRNA in the 30S particle. This chain is Ribosomal RNA small subunit methyltransferase C, found in Klebsiella pneumoniae subsp. pneumoniae (strain ATCC 700721 / MGH 78578).